The following is a 411-amino-acid chain: Glutamate dehydrogenase 1 (411 aa).

Lys102 is an active-site residue.

It belongs to the Glu/Leu/Phe/Val dehydrogenases family.

The catalysed reaction is L-glutamate + NAD(+) + H2O = 2-oxoglutarate + NH4(+) + NADH + H(+). The enzyme catalyses L-glutamate + NADP(+) + H2O = 2-oxoglutarate + NH4(+) + NADPH + H(+). This chain is Glutamate dehydrogenase 1 (GDH1), found in Arabidopsis thaliana (Mouse-ear cress).